The sequence spans 362 residues: 3-dehydroquinate synthase (362 aa).

NAD(+)-binding positions include 70-75 (EGEQYK), 104-108 (GVIGD), 128-129 (TT), Lys-141, Lys-150, and 168-171 (TLTT). 3 residues coordinate Zn(2+): Glu-183, His-246, and His-263.

It belongs to the sugar phosphate cyclases superfamily. Dehydroquinate synthase family. Co(2+) serves as cofactor. Requires Zn(2+) as cofactor. The cofactor is NAD(+).

Its subcellular location is the cytoplasm. It carries out the reaction 7-phospho-2-dehydro-3-deoxy-D-arabino-heptonate = 3-dehydroquinate + phosphate. It functions in the pathway metabolic intermediate biosynthesis; chorismate biosynthesis; chorismate from D-erythrose 4-phosphate and phosphoenolpyruvate: step 2/7. Functionally, catalyzes the conversion of 3-deoxy-D-arabino-heptulosonate 7-phosphate (DAHP) to dehydroquinate (DHQ). The sequence is that of 3-dehydroquinate synthase from Histophilus somni (strain 2336) (Haemophilus somnus).